The sequence spans 799 residues: Dipeptidyl peptidase family member 1 (799 aa).

The Cytoplasmic portion of the chain corresponds to 1-31 (MTAEADLLEGYDEELGGNESQKRDCKGITTA). A helical; Signal-anchor for type II membrane protein transmembrane segment spans residues 32 to 52 (IVVVLLILVMIFAALVFFTPL). At 53–799 (FAAKSFGSWR…FLRQCFYTDK (747 aa)) the chain is on the lumenal side. N-linked (GlcNAc...) asparagine glycosylation is found at Asn-64, Asn-138, Asn-267, and Asn-335. Cys-474 and Cys-477 are oxidised to a cystine. Residue Asn-481 is glycosylated (N-linked (GlcNAc...) asparagine). Cys-482 and Cys-500 form a disulfide bridge. N-linked (GlcNAc...) asparagine glycosylation occurs at Asn-512. Residues Ser-669, Asp-742, and His-774 each act as charge relay system in the active site. Cys-689 and Cys-794 are joined by a disulfide.

The protein belongs to the peptidase S9B family. DPPIV subfamily.

The protein localises to the cell membrane. In terms of biological role, removes N-terminal dipeptides sequentially from polypeptides. Essential for control of distal tip cell migration. The polypeptide is Dipeptidyl peptidase family member 1 (dpf-1) (Caenorhabditis elegans).